We begin with the raw amino-acid sequence, 963 residues long: Translation initiation factor IF-2 (963 aa).

Positions 53-77 (SHGQADDSARKKITLTKRETSEIRQ) are enriched in basic and acidic residues. The tract at residues 53–377 (SHGQADDSAR…RSNFQAPTEP (325 aa)) is disordered. A compositionally biased stretch (polar residues) spans 78–87 (SDATGKTRTV). 4 stretches are compositionally biased toward basic and acidic residues: residues 98-110 (IKRD…HQAD), 123-183 (EEAR…KAEE), 197-250 (DTSR…EAEA), and 267-278 (PSERKAEEKKAE). Positions 343–356 (SSGGVGGWRGGPRG) are enriched in gly residues. The 170-residue stretch at 463-632 (PRPPVVTVMG…SLQAEVLELK (170 aa)) folds into the tr-type G domain. A G1 region spans residues 472–479 (GHVDHGKT). 472–479 (GHVDHGKT) contacts GTP. The segment at 497-501 (GITQH) is G2. The G3 stretch occupies residues 518 to 521 (DTPG). GTP-binding positions include 518 to 522 (DTPGH) and 572 to 575 (NKVD). The interval 572–575 (NKVD) is G4. Residues 608-610 (SAK) form a G5 region.

It belongs to the TRAFAC class translation factor GTPase superfamily. Classic translation factor GTPase family. IF-2 subfamily.

It localises to the cytoplasm. One of the essential components for the initiation of protein synthesis. Protects formylmethionyl-tRNA from spontaneous hydrolysis and promotes its binding to the 30S ribosomal subunits. Also involved in the hydrolysis of GTP during the formation of the 70S ribosomal complex. The protein is Translation initiation factor IF-2 of Cupriavidus taiwanensis (strain DSM 17343 / BCRC 17206 / CCUG 44338 / CIP 107171 / LMG 19424 / R1) (Ralstonia taiwanensis (strain LMG 19424)).